Here is a 302-residue protein sequence, read N- to C-terminus: Probable lipid kinase YegS-like (302 aa).

In terms of domain architecture, DAGKc spans 1 to 129 (MDKDKVLLVL…IDLGAVNGKL (129 aa)). ATP is bound by residues Thr-39, 65–71 (GDGTLRE), and Thr-92. The Mg(2+) site is built by Arg-210, Asp-213, and Leu-215. Glu-268 (proton acceptor) is an active-site residue.

The protein belongs to the diacylglycerol/lipid kinase family. YegS lipid kinase subfamily. Mg(2+) serves as cofactor. Ca(2+) is required as a cofactor.

It is found in the cytoplasm. Its function is as follows. Probably phosphorylates lipids; the in vivo substrate is unknown. The chain is Probable lipid kinase YegS-like from Pseudomonas aeruginosa (strain UCBPP-PA14).